Consider the following 216-residue polypeptide: Cell division protein SepF (216 aa).

The segment at 22-126 (EYVEEPDQAR…PVVDDGGPLA (105 aa)) is disordered. 3 stretches are compositionally biased toward basic and acidic residues: residues 28–50 (DQAR…REFV), 62–80 (SRRD…RPRV), and 106–118 (ARAE…RAPV).

The protein belongs to the SepF family. Homodimer. Interacts with FtsZ.

The protein localises to the cytoplasm. Its function is as follows. Cell division protein that is part of the divisome complex and is recruited early to the Z-ring. Probably stimulates Z-ring formation, perhaps through the cross-linking of FtsZ protofilaments. Its function overlaps with FtsA. This is Cell division protein SepF from Rhodococcus erythropolis (strain PR4 / NBRC 100887).